Reading from the N-terminus, the 48-residue chain is Large ribosomal subunit protein eL40 (48 aa).

Belongs to the eukaryotic ribosomal protein eL40 family.

In Methanoculleus marisnigri (strain ATCC 35101 / DSM 1498 / JR1), this protein is Large ribosomal subunit protein eL40.